Consider the following 176-residue polypeptide: Nucleoside triphosphate/diphosphate phosphatase (176 aa).

The active-site Proton donor is R23. N87, D103, D105, D107, D120, and E123 together coordinate Mg(2+).

Belongs to the Ntdp family. Mg(2+) serves as cofactor.

It carries out the reaction a ribonucleoside 5'-triphosphate + H2O = a ribonucleoside 5'-diphosphate + phosphate + H(+). The catalysed reaction is a ribonucleoside 5'-diphosphate + H2O = a ribonucleoside 5'-phosphate + phosphate + H(+). Its function is as follows. Has nucleoside phosphatase activity towards nucleoside triphosphates and nucleoside diphosphates. In Bacillus licheniformis (strain ATCC 14580 / DSM 13 / JCM 2505 / CCUG 7422 / NBRC 12200 / NCIMB 9375 / NCTC 10341 / NRRL NRS-1264 / Gibson 46), this protein is Nucleoside triphosphate/diphosphate phosphatase.